The sequence spans 48 residues: Large ribosomal subunit protein bL33B (48 aa).

It belongs to the bacterial ribosomal protein bL33 family.

The polypeptide is Large ribosomal subunit protein bL33B (rpmG2) (Mycoplasma genitalium (strain ATCC 33530 / DSM 19775 / NCTC 10195 / G37) (Mycoplasmoides genitalium)).